Reading from the N-terminus, the 98-residue chain is uncharacterized protein (98 aa).

The next 2 membrane-spanning stretches (helical) occupy residues 13 to 33 (LFSL…IAIF) and 65 to 85 (IMVI…IFIS).

Its subcellular location is the membrane. This is an uncharacterized protein from Saccharomyces cerevisiae (strain ATCC 204508 / S288c) (Baker's yeast).